The following is a 7192-amino-acid chain: Nonribosomal peptide synthetase gloA (7192 aa).

Polar residues predominate over residues 1 to 48; it reads MTPSRSLENGEKQMNWNESPQTASPKNVLRDSNSNGNYVNGHGTNING. Residues 1–52 form a disordered region; it reads MTPSRSLENGEKQMNWNESPQTASPKNVLRDSNSNGNYVNGHGTNINGDGSD. Residues 105–181 form the Carrier 1 domain; that stretch reads HSTSKFKEEF…GLFATANFRP (77 aa). An O-(pantetheine 4'-phosphoryl)serine modification is found at Ser-142. The condensation 1 stretch occupies residues 239 to 634; that stretch reads EDVYPCTPLQ…TYTVQCLCNP (396 aa). The adenylation 1 stretch occupies residues 675–1047; that stretch reads QDQVNIQPAK…SLMYLGRCDS (373 aa). The 77-residue stretch at 1190-1266 folds into the Carrier 2 domain; it reads APSTDAEKQV…DLAFVIQRRL (77 aa). The residue at position 1227 (Ser-1227) is an O-(pantetheine 4'-phosphoryl)serine. The tract at residues 1316–1736 is condensation 2; the sequence is EDIYPCTPLQ…MSWLSDYDEE (421 aa). An adenylation 2 region spans residues 1758 to 2154; the sequence is QEQTKLRPNA…GRRDTQIKIR (397 aa). The 77-residue stretch at 2288–2364 folds into the Carrier 3 domain; that stretch reads APSTREECLV…ELAELLAKRS (77 aa). Ser-2325 carries the O-(pantetheine 4'-phosphoryl)serine modification. Residues 2407–2829 form a condensation 3 region; it reads VEDVYPCTPL…LIAPEDQEQI (423 aa). The tract at residues 2849-3245 is adenylation 3; that stretch reads YKQVMARPQA…GRRDDQIKIR (397 aa). One can recognise a Carrier 4 domain in the interval 3378–3455; that stretch reads TPSTKMEKVI…DLASVMTEHR (78 aa). O-(pantetheine 4'-phosphoryl)serine is present on Ser-3415. The interval 3502–3891 is condensation 4; sequence EDIYPCTALQ…NGVLDQFVYI (390 aa). Positions 3920–4320 are adenylation 4; sequence QEQALARPTA…ARRDMQVKIR (401 aa). The Carrier 5 domain maps to 4453–4529; the sequence is LPSTQVELQL…ELAVILDGRK (77 aa). An O-(pantetheine 4'-phosphoryl)serine modification is found at Ser-4490. Residues 4574–4971 are condensation 5; it reads EDIYPCTPLQ…QFEYVVQKFH (398 aa). Residues 5013 to 5414 form an adenylation 5 region; it reads DDHVAARPMA…GRQDLQVKIR (402 aa). Residues 5551–5627 enclose the Carrier 6 domain; it reads APDTDLGRLI…DLVNTLSNRS (77 aa). Ser-5588 carries the O-(pantetheine 4'-phosphoryl)serine modification. Residues 5674 to 6071 are condensation 6; sequence EDVYPSTPLQ…CVVQRILTQS (398 aa). The adenylation 6 stretch occupies residues 6111–6507; that stretch reads QAQVKKSPAA…GRRDLQVKIR (397 aa). The 77-residue stretch at 6645 to 6721 folds into the Carrier 7 domain; the sequence is NPSTTMERQL…DLAVVLTDRL (77 aa). Ser-6682 bears the O-(pantetheine 4'-phosphoryl)serine mark. Positions 6795-7178 are condensation 7; the sequence is NGPCDTRALK…NPLSPVKQVL (384 aa).

It belongs to the NRP synthetase family.

It functions in the pathway mycotoxin biosynthesis. Its function is as follows. Nonribosomal peptide synthetase; part of the gene cluster that mediates the biosynthesis of pneumocandins, lipohexapeptides of the echinocandin family that prevent fungal cell wall formation by non-competitive inhibition of beta-1,3-glucan synthase. The 10,12-dimethylmyristoyl side chain is synthesized by the reducing polyketide synthase gloL/GLPKS4. The thioesterase gloN/GLHYD exclusively interacts with gloL/GLPKS4 to maintain turnover of the polyketide side chain. The 10R,12S-dimethylmyristic acid is then transferred to the first thiolation domain of the nonribosomal peptide synthetase gloA/GLNRPS4 by the acyl-AMP ligase gloD/GLligase, followed by its acylation to L-ornithine to trigger elongation of the cyclic hexapeptide. L-ornithine, 4R-hydroxyl-L-proline (generated from L-proline by the dioxygenase gloF/GLOXY2), 3S-hydroxyl-L-homotyrosine (generated by gloG/GLHtyB, gloH/GLHtyA, gloI/GLHtyC, gloJ/GLHtyD and hydroxylated at C-3 by the dioxygenase gloM/GLOXY1), 3R-hydroxyl-L-glutamine (generated from L-glutamine probably by the dioxygenase gloE/GLOXY3) and 3S-hydroxyl-L-proline (generated from L-proline by the dioxygenase gloF/GLOXY2 to yield pneumocandin B0), or 3S-hydroxyl-4S-methyl-L-proline (generated from L-leucine by the dioxygenase gloC/GLOXY4 to yield pneumocandin A0) are sequentially added to the growing chain. The last C domain of gloA/GLNRPS4 is proposed to be responsible for cyclization by condensation to form the peptide bond between L-ornithine and 3S-hydroxyl-4S-methyl-L-proline (for pneumocandin A0) or 3S-hydroxyl-L-proline (for pneumocandin B0). Finally, the subsequent C-4 hydroxylation of 3S-hydroxyl-L-homotyrosine and L-ornithine dihydroxylation at C-4 and C-5 are performed by the cytochrome P450 monooxygenases gloP/GLP450-1 and gloO/GLP450-2, respectively. This is Nonribosomal peptide synthetase gloA from Glarea lozoyensis (strain ATCC 20868 / MF5171).